Here is a 632-residue protein sequence, read N- to C-terminus: Probable potassium transport system protein Kup 1 (632 aa).

12 consecutive transmembrane segments (helical) span residues 17–37 (LFYL…TSPL), 60–80 (LISL…VLFL), 106–126 (TAIL…DAMI), 146–166 (LADY…VVQS), 175–195 (FFGP…ISHI), 210–230 (AVAF…AVFL), 254–274 (WFLL…ALVL), 292–312 (ALLP…QAVI), 344–364 (IFVP…VLGF), 370–390 (LATA…IMAF), 401–421 (LPVA…FLGA), and 426–446 (IHDG…VMWT).

Belongs to the HAK/KUP transporter (TC 2.A.72) family.

The protein localises to the cell inner membrane. The enzyme catalyses K(+)(in) + H(+)(in) = K(+)(out) + H(+)(out). In terms of biological role, transport of potassium into the cell. Likely operates as a K(+):H(+) symporter. This Rhizobium johnstonii (strain DSM 114642 / LMG 32736 / 3841) (Rhizobium leguminosarum bv. viciae) protein is Probable potassium transport system protein Kup 1.